The sequence spans 156 residues: Small ribosomal subunit protein uS7 (156 aa).

Belongs to the universal ribosomal protein uS7 family. Part of the 30S ribosomal subunit. Contacts proteins S9 and S11.

One of the primary rRNA binding proteins, it binds directly to 16S rRNA where it nucleates assembly of the head domain of the 30S subunit. Is located at the subunit interface close to the decoding center, probably blocks exit of the E-site tRNA. The sequence is that of Small ribosomal subunit protein uS7 from Macrococcus caseolyticus (strain JCSC5402) (Macrococcoides caseolyticum).